The chain runs to 130 residues: EG45-like domain containing protein 2 (130 aa).

An N-terminal signal peptide occupies residues 1–25 (MIKMAVKFVVVMIVFAQILAPIAEA). One can recognise an Expansin-like EG45 domain in the interval 28–130 (GKAVYYDPPY…GNIRVVYTPI (103 aa)). N-linked (GlcNAc...) asparagine glycosylation occurs at Asn-106.

Expressed in unstressed leaves.

Its subcellular location is the secreted. Plays a systemic role in water and solute homeostasis. In Arabidopsis thaliana (Mouse-ear cress), this protein is EG45-like domain containing protein 2 (EGC2).